A 688-amino-acid polypeptide reads, in one-letter code: Zinc finger and BTB domain-containing protein 48 (688 aa).

The region spanning 26–89 is the BTB domain; the sequence is CDATLDVGGL…FYTGHLALTS (64 aa). Positions 119–140 are disordered; it reads SVGQAAGGQSGLGPPASQNVNS. Residue Lys-143 forms a Glycyl lysine isopeptide (Lys-Gly) (interchain with G-Cter in SUMO2) linkage. Positions 161-192 are disordered; sequence PRDQEPRGSHSPQRPQLHSPAQSEGPSSLCGK. Residues Ser-169, Ser-171, and Ser-179 each carry the phosphoserine modification. A compositionally biased stretch (polar residues) spans 170–186; it reads HSPQRPQLHSPAQSEGP. A Glycyl lysine isopeptide (Lys-Gly) (interchain with G-Cter in SUMO2) cross-link involves residue Lys-263. The segment at 291–313 adopts a C2H2-type 1 zinc-finger fold; sequence VECPTCHKKFLSKYYLKVHNRKH. The Zn(2+) site is built by Cys-293, Cys-296, His-309, His-313, Cys-321, Cys-324, His-337, Cys-342, Cys-352, Cys-355, His-368, His-372, Cys-380, Cys-383, His-396, and His-401. Residues 319 to 344 form a CCHC-type zinc finger; it reads FECPKCGKCYFRKENLLEHEARNCMN. C2H2-type zinc fingers lie at residues 350–372, 378–401, 407–430, 436–459, 465–487, 493–515, 521–544, 550–572, and 578–600; these read FTCS…MVSH, YKCS…IKLH, HACP…AFKH, FVCE…KAKH, HVCE…LRTH, FQCH…NRTH, FSCE…ASRH, HFCQ…VRRH, and FECT…MEIH. Zn(2+)-binding residues include Cys-552, Cys-555, His-568, Cys-580, Cys-583, His-596, and His-600.

The protein belongs to the krueppel C2H2-type zinc-finger protein family. As to quaternary structure, interacts with EP300. In terms of tissue distribution, detected in adrenal gland and neuroblastoma.

Its subcellular location is the nucleus. It localises to the chromosome. The protein resides in the telomere. In terms of biological role, plays a critical role in transcriptional regulation and chromatin remodeling. Acts as a regulator of telomere length. Directly binds the telomeric double-stranded 5'-TTAGGG-3' repeat. Preferentially binds to telomeres that have a low concentration of shelterin complex and acts as a regulator of telomere length by initiating telomere trimming, a process that prevents the accumulation of aberrantly long telomeres. Also acts as a transcription regulator that binds to promoter regions. Regulates expression of a small subset of genes, including MTFP1. Acts as a negative regulator of cell proliferation by specifically activating expression of ARF, a tumor suppressor isoform of CDKN2A. Acts as a transcription regulator of CIITA, the major factor regulating MHC class II gene expression. In addition, regulates cellular m6A/m6Am methylation on RNA by facilitating the recruitment of the RNA demethylase, FTO, to target mRNAs. This is Zinc finger and BTB domain-containing protein 48 from Homo sapiens (Human).